The sequence spans 404 residues: Cysteine desulfurase IscS (404 aa).

Residues 75–76 (AT), Asn155, Gln183, and 203–205 (SAH) contribute to the pyridoxal 5'-phosphate site. An N6-(pyridoxal phosphate)lysine modification is found at Lys206. Thr243 contributes to the pyridoxal 5'-phosphate binding site. Cys328 functions as the Cysteine persulfide intermediate in the catalytic mechanism. Cys328 lines the [2Fe-2S] cluster pocket.

This sequence belongs to the class-V pyridoxal-phosphate-dependent aminotransferase family. NifS/IscS subfamily. Homodimer. Forms a heterotetramer with IscU, interacts with other sulfur acceptors. Requires pyridoxal 5'-phosphate as cofactor.

The protein resides in the cytoplasm. It catalyses the reaction (sulfur carrier)-H + L-cysteine = (sulfur carrier)-SH + L-alanine. Its pathway is cofactor biosynthesis; iron-sulfur cluster biosynthesis. Master enzyme that delivers sulfur to a number of partners involved in Fe-S cluster assembly, tRNA modification or cofactor biosynthesis. Catalyzes the removal of elemental sulfur atoms from cysteine to produce alanine. Functions as a sulfur delivery protein for Fe-S cluster synthesis onto IscU, an Fe-S scaffold assembly protein, as well as other S acceptor proteins. The protein is Cysteine desulfurase IscS of Photorhabdus laumondii subsp. laumondii (strain DSM 15139 / CIP 105565 / TT01) (Photorhabdus luminescens subsp. laumondii).